The primary structure comprises 404 residues: Nicotinate phosphoribosyltransferase (404 aa).

His-224 is subject to Phosphohistidine; by autocatalysis.

The protein belongs to the NAPRTase family. Post-translationally, transiently phosphorylated on a His residue during the reaction cycle. Phosphorylation strongly increases the affinity for substrates and increases the rate of nicotinate D-ribonucleotide production. Dephosphorylation regenerates the low-affinity form of the enzyme, leading to product release.

It catalyses the reaction nicotinate + 5-phospho-alpha-D-ribose 1-diphosphate + ATP + H2O = nicotinate beta-D-ribonucleotide + ADP + phosphate + diphosphate. It functions in the pathway cofactor biosynthesis; NAD(+) biosynthesis; nicotinate D-ribonucleotide from nicotinate: step 1/1. Functionally, catalyzes the synthesis of beta-nicotinate D-ribonucleotide from nicotinate and 5-phospho-D-ribose 1-phosphate at the expense of ATP. The chain is Nicotinate phosphoribosyltransferase from Proteus mirabilis (strain HI4320).